A 210-amino-acid polypeptide reads, in one-letter code: Protein GrpE (210 aa).

The disordered stretch occupies residues 191–210 (KGGPKPAEAETNSVFDEKDA).

The protein belongs to the GrpE family. Homodimer.

Its subcellular location is the cytoplasm. Functionally, participates actively in the response to hyperosmotic and heat shock by preventing the aggregation of stress-denatured proteins, in association with DnaK and GrpE. It is the nucleotide exchange factor for DnaK and may function as a thermosensor. Unfolded proteins bind initially to DnaJ; upon interaction with the DnaJ-bound protein, DnaK hydrolyzes its bound ATP, resulting in the formation of a stable complex. GrpE releases ADP from DnaK; ATP binding to DnaK triggers the release of the substrate protein, thus completing the reaction cycle. Several rounds of ATP-dependent interactions between DnaJ, DnaK and GrpE are required for fully efficient folding. This chain is Protein GrpE, found in Rhizobium etli (strain CIAT 652).